The chain runs to 106 residues: MVNVPKTRRTYCKGKACKKHTPHKVTQYKKGKDSIFAQGKRRYDRKQSGYGGQTKPVFHKKAKTTKKVVLRLECSVCKYKMQMTLKRCKHFELGGDKKTKGAAISF.

Residues 36 to 56 are disordered; that stretch reads FAQGKRRYDRKQSGYGGQTKP.

The protein belongs to the eukaryotic ribosomal protein eL42 family.

This is Large ribosomal subunit protein eL42 (RPL44) from Phaffia rhodozyma (Yeast).